We begin with the raw amino-acid sequence, 101 residues long: Acylphosphatase (101 aa).

The region spanning 12 to 98 (RVHVFVTGRV…EGLRGFEVKR (87 aa)) is the Acylphosphatase-like domain. Active-site residues include R27 and N45.

The protein belongs to the acylphosphatase family.

The catalysed reaction is an acyl phosphate + H2O = a carboxylate + phosphate + H(+). This is Acylphosphatase (acyP) from Trichormus variabilis (strain ATCC 29413 / PCC 7937) (Anabaena variabilis).